Here is a 322-residue protein sequence, read N- to C-terminus: Homeobox protein DBX1-B (322 aa).

The segment at residues 179–238 (GMLRRAVFSDVQRKALEKMFQKQKYISKPDRKKLATKLGLKDSQVKIWFQNRRMKWRNSK) is a DNA-binding region (homeobox). Disordered regions lie at residues 238–266 (KERE…LSDV) and 296–322 (DLHF…ITVS). The span at 312–322 (SESEDEEITVS) shows a compositional bias: acidic residues.

This sequence belongs to the H2.0 homeobox family.

It is found in the nucleus. This chain is Homeobox protein DBX1-B (dbx1b), found in Danio rerio (Zebrafish).